A 429-amino-acid chain; its full sequence is UDP-N-acetylglucosamine 1-carboxyvinyltransferase 2 (429 aa).

22-23 (KN) is a binding site for phosphoenolpyruvate. Arginine 93 lines the UDP-N-acetyl-alpha-D-glucosamine pocket. The active-site Proton donor is cysteine 117. The residue at position 117 (cysteine 117) is a 2-(S-cysteinyl)pyruvic acid O-phosphothioketal. UDP-N-acetyl-alpha-D-glucosamine is bound by residues 122–126 (RPIDQ), aspartate 305, and isoleucine 327.

It belongs to the EPSP synthase family. MurA subfamily.

The protein localises to the cytoplasm. It carries out the reaction phosphoenolpyruvate + UDP-N-acetyl-alpha-D-glucosamine = UDP-N-acetyl-3-O-(1-carboxyvinyl)-alpha-D-glucosamine + phosphate. The protein operates within cell wall biogenesis; peptidoglycan biosynthesis. In terms of biological role, cell wall formation. Adds enolpyruvyl to UDP-N-acetylglucosamine. The chain is UDP-N-acetylglucosamine 1-carboxyvinyltransferase 2 from Bacillus anthracis.